The sequence spans 183 residues: Casparian strip membrane protein 2 (183 aa).

Residues 1–23 (MDSGEQGETSKAPLNKGVSRGVS) lie on the Cytoplasmic side of the membrane. Residues 24–44 (ILDLILRVIAVISTLASAIAM) traverse the membrane as a helical segment. Residues 45 to 71 (GTTNETLPLFTPFIQFKARYSDLPALT) are Extracellular-facing. N-linked (GlcNAc...) asparagine glycosylation is present at Asn48. Residues 72-92 (FFVVANSIVSAYLILSLPLSI) form a helical membrane-spanning segment. Over 93–104 (AHIIRSGAKYSR) the chain is Cytoplasmic. A helical transmembrane segment spans residues 105–125 (LVLIIFDAAMLALVTAASSAA). The Extracellular segment spans residues 126-158 (TAIVYLAHKGNVRANWLAICQQLDSFCERTSGS). Residues 159–179 (LVGSFGAMVLLILLILLSAMA) form a helical membrane-spanning segment. Residues 180–183 (LARR) lie on the Cytoplasmic side of the membrane.

The protein belongs to the Casparian strip membrane proteins (CASP) family. As to quaternary structure, homodimer and heterodimers.

Its subcellular location is the cell membrane. Functionally, regulates membrane-cell wall junctions and localized cell wall deposition. Required for establishment of the Casparian strip membrane domain (CSD) and the subsequent formation of Casparian strips, a cell wall modification of the root endodermis that determines an apoplastic barrier between the intraorganismal apoplasm and the extraorganismal apoplasm and prevents lateral diffusion. The protein is Casparian strip membrane protein 2 of Triticum aestivum (Wheat).